Here is a 476-residue protein sequence, read N- to C-terminus: ATP synthase subunit beta (476 aa).

158 to 165 (GGAGVGKT) contributes to the ATP binding site.

The protein belongs to the ATPase alpha/beta chains family. As to quaternary structure, F-type ATPases have 2 components, CF(1) - the catalytic core - and CF(0) - the membrane proton channel. CF(1) has five subunits: alpha(3), beta(3), gamma(1), delta(1), epsilon(1). CF(0) has three main subunits: a(1), b(2) and c(9-12). The alpha and beta chains form an alternating ring which encloses part of the gamma chain. CF(1) is attached to CF(0) by a central stalk formed by the gamma and epsilon chains, while a peripheral stalk is formed by the delta and b chains.

It is found in the cell inner membrane. The enzyme catalyses ATP + H2O + 4 H(+)(in) = ADP + phosphate + 5 H(+)(out). In terms of biological role, produces ATP from ADP in the presence of a proton gradient across the membrane. The catalytic sites are hosted primarily by the beta subunits. In Paracidovorax citrulli (strain AAC00-1) (Acidovorax citrulli), this protein is ATP synthase subunit beta.